Reading from the N-terminus, the 185-residue chain is Ribosome-recycling factor (185 aa).

The protein belongs to the RRF family.

It is found in the cytoplasm. Functionally, responsible for the release of ribosomes from messenger RNA at the termination of protein biosynthesis. May increase the efficiency of translation by recycling ribosomes from one round of translation to another. This Corynebacterium glutamicum (strain R) protein is Ribosome-recycling factor.